The sequence spans 460 residues: tRNA modification GTPase MnmE (460 aa).

Residues arginine 24, glutamate 81, and lysine 121 each contribute to the (6S)-5-formyl-5,6,7,8-tetrahydrofolate site. The TrmE-type G domain occupies 218–384; the sequence is GLVVAIAGPP…MVEALAGFAA (167 aa). GTP-binding positions include 228–233, 247–253, and 272–275; these read NVGKST, SPHAGTT, and DTAG. The Mg(2+) site is built by serine 232 and threonine 253. Lysine 460 serves as a coordination point for (6S)-5-formyl-5,6,7,8-tetrahydrofolate.

This sequence belongs to the TRAFAC class TrmE-Era-EngA-EngB-Septin-like GTPase superfamily. TrmE GTPase family. Homodimer. Heterotetramer of two MnmE and two MnmG subunits. It depends on K(+) as a cofactor.

The protein localises to the cytoplasm. In terms of biological role, exhibits a very high intrinsic GTPase hydrolysis rate. Involved in the addition of a carboxymethylaminomethyl (cmnm) group at the wobble position (U34) of certain tRNAs, forming tRNA-cmnm(5)s(2)U34. The protein is tRNA modification GTPase MnmE of Rhodopseudomonas palustris (strain HaA2).